We begin with the raw amino-acid sequence, 171 residues long: Skp-like protein (171 aa).

The signal sequence occupies residues 1–21; sequence MKKLLFSTFLLVLGSTSAAHA.

It belongs to the Skp family.

This chain is Skp-like protein, found in Chlamydia pneumoniae (Chlamydophila pneumoniae).